The sequence spans 158 residues: MASVEKLPMLAEGYEKLTAELKALREERPRIVDAIEEARAHGDLSENAEYHAAKERQGQVEATIADLEDRVSRAQIIDPTTLSGDKIIFGATVTLLDDDEKPVKYQIVGPYEADAKKGMISYNSPLGKALIGRKVDEEIEVTVPSGDKFYLVQKIEFI.

Residues 5–75 (EKLPMLAEGY…DLEDRVSRAQ (71 aa)) adopt a coiled-coil conformation.

This sequence belongs to the GreA/GreB family.

Functionally, necessary for efficient RNA polymerase transcription elongation past template-encoded arresting sites. The arresting sites in DNA have the property of trapping a certain fraction of elongating RNA polymerases that pass through, resulting in locked ternary complexes. Cleavage of the nascent transcript by cleavage factors such as GreA or GreB allows the resumption of elongation from the new 3'terminus. GreA releases sequences of 2 to 3 nucleotides. The chain is Transcription elongation factor GreA from Novosphingobium aromaticivorans (strain ATCC 700278 / DSM 12444 / CCUG 56034 / CIP 105152 / NBRC 16084 / F199).